A 183-amino-acid polypeptide reads, in one-letter code: Mitochondrial inner membrane protease subunit 2 (183 aa).

Residues 13–35 (AFVSGFFVAVPVTVTVLDRLAYV) form a helical membrane-spanning segment. Residues serine 42 and lysine 90 contribute to the active site. Residues 161–183 (SVPPDRRPLLNWDRAAEDKYDDD) form a disordered region. Basic and acidic residues predominate over residues 164 to 183 (PDRRPLLNWDRAAEDKYDDD).

This sequence belongs to the peptidase S26 family. IMP2 subfamily. Heterodimer of 2 subunits, IMMPL1 and IMMPL2.

Its subcellular location is the mitochondrion inner membrane. Its function is as follows. Catalyzes the removal of transit peptides required for the targeting of proteins from the mitochondrial matrix, across the inner membrane, into the inter-membrane space. In Danio rerio (Zebrafish), this protein is Mitochondrial inner membrane protease subunit 2 (immp2l).